Reading from the N-terminus, the 139-residue chain is Putative nickel-responsive regulator (139 aa).

Residues His79, His90, His92, and Cys98 each coordinate Ni(2+).

The protein belongs to the transcriptional regulatory CopG/NikR family. It depends on Ni(2+) as a cofactor.

Functionally, transcriptional regulator. This chain is Putative nickel-responsive regulator, found in Anaeromyxobacter sp. (strain K).